Reading from the N-terminus, the 151-residue chain is UPF0735 ACT domain-containing protein SSP1116 (151 aa).

One can recognise an ACT domain in the interval 74–149 (TLILYVNDIV…HVSKVELISM (76 aa)).

This sequence belongs to the UPF0735 family.

This is UPF0735 ACT domain-containing protein SSP1116 from Staphylococcus saprophyticus subsp. saprophyticus (strain ATCC 15305 / DSM 20229 / NCIMB 8711 / NCTC 7292 / S-41).